Consider the following 156-residue polypeptide: Ribosomal RNA large subunit methyltransferase H (156 aa).

S-adenosyl-L-methionine contacts are provided by residues Leu-73, Gly-104, and 123 to 128 (LSPLTL).

The protein belongs to the RNA methyltransferase RlmH family. Homodimer.

It localises to the cytoplasm. It catalyses the reaction pseudouridine(1915) in 23S rRNA + S-adenosyl-L-methionine = N(3)-methylpseudouridine(1915) in 23S rRNA + S-adenosyl-L-homocysteine + H(+). In terms of biological role, specifically methylates the pseudouridine at position 1915 (m3Psi1915) in 23S rRNA. The sequence is that of Ribosomal RNA large subunit methyltransferase H from Serratia proteamaculans (strain 568).